Here is a 600-residue protein sequence, read N- to C-terminus: Rhesus-like glycoprotein B (600 aa).

Residues 1–16 (MSKDEHKLPLSKRKES) lie on the Cytoplasmic side of the membrane. The chain crosses the membrane as a helical span at residues 17 to 37 (IIFMMILFAFQVFMVVLFSVW). The Extracellular portion of the chain corresponds to 38–73 (VRYSKNEVNYSTLTPEQLQELEATGGVVQEEVTNIY). The N-linked (GlcNAc...) asparagine glycan is linked to Asn46. The chain crosses the membrane as a helical span at residues 74-94 (GYFRDINIMIFFGFGFLMTFL). Residues 95–102 (RRYGYSAL) lie on the Cytoplasmic side of the membrane. A helical membrane pass occupies residues 103–123 (GYTFIISALVAQWSVLIYGFF). Residues 124–145 (ETVDHKNDHGGDYASTFEMSQT) are Extracellular-facing. A helical membrane pass occupies residues 146–166 (VLLQGLFCAGAVMISYGAVLG). Over 167–170 (RVTP) the chain is Cytoplasmic. Residues 171–191 (LQMLVVGIFEPIFYFLNMFIG) traverse the membrane as a helical segment. Over 192-199 (EMNLEAID) the chain is Extracellular. Residues 200–220 (VGGGMYIHLFGSVFGLTIAWF) form a helical membrane-spanning segment. The Cytoplasmic segment spans residues 221–240 (LTDKKSKDCEDNSPSYTGDY). The chain crosses the membrane as a helical span at residues 241-261 (FAMAGTLFLWMMWPSFNAAIA). Over 262 to 274 (PLGEPQFRAIANT) the chain is Extracellular. The chain crosses the membrane as a helical span at residues 275–295 (FLSLTASTIATFIVTRLFGHL). Residues 296–303 (GHKIDMVH) lie on the Cytoplasmic side of the membrane. A helical membrane pass occupies residues 304–323 (VQNSSLAGGVVQGCLAHMNI). Topologically, residues 324-325 (NP) are extracellular. The helical transmembrane segment at 326 to 346 (GGAIGMGFLAGVISVIGYLFI) threads the bilayer. Over 347–361 (SPFLQRRFNIQDTCG) the chain is Cytoplasmic. A helical transmembrane segment spans residues 362 to 382 (IHNLHFMPGFIGSIAACIAAW). Residues 383 to 411 (KGLNDRSLYNPIEFNQIFRAGEDQARNNA) lie on the Extracellular side of the membrane. The chain crosses the membrane as a helical span at residues 412-432 (AATFISIGIAIAGGLFVGMIL). At 433 to 600 (KALKKVGGLK…SSTNSPTSKV (168 aa)) the chain is on the cytoplasmic side. The disordered stretch occupies residues 471-600 (NLPMPTTDNG…SSTNSPTSKV (130 aa)). Residues 498–510 (NKKENGYRRDLIR) show a composition bias toward basic and acidic residues. Residues 519 to 529 (EQSTDSSYSDS) are compositionally biased toward low complexity. A compositionally biased stretch (basic residues) spans 540-554 (RIRKLAKKSYRRSKK). A compositionally biased stretch (basic and acidic residues) spans 555 to 566 (SHSEHQPQHQPE). Positions 571–580 (NNNNNNNNNN) are enriched in low complexity. A compositionally biased stretch (polar residues) spans 581 to 600 (ATAETTDNGGSSTNSPTSKV).

This sequence belongs to the ammonium transporter (TC 2.A.49) family. Rh subfamily.

It localises to the membrane. May be a carbon dioxide/bicarbonate transporter. The sequence is that of Rhesus-like glycoprotein B (rhgB) from Dictyostelium discoideum (Social amoeba).